Reading from the N-terminus, the 132-residue chain is T-cell receptor alpha chain V region 2B4 (132 aa).

Residues 1-20 form the signal peptide; that stretch reads MKSLSVSLVVLWLLLNWVNS. Positions 21-113 are v segment; the sequence is QQNVQQSPES…SALYLCAVTL (93 aa). The N-linked (GlcNAc...) asparagine glycan is linked to Asn-42. A d segment region spans residues 114–117; it reads YGGS. Residues 118 to 132 are j segment; sequence GNKLIFGTGTLLSVK.

In Mus musculus (Mouse), this protein is T-cell receptor alpha chain V region 2B4.